The following is a 192-amino-acid chain: uncharacterized protein (192 aa).

The 121-residue stretch at 72–192 folds into the B12-binding domain; sequence GATVLLIVPP…SLVISEFSLV (121 aa).

This is an uncharacterized protein from Rhodobacter capsulatus (Rhodopseudomonas capsulata).